Here is a 394-residue protein sequence, read N- to C-terminus: Probable peptidoglycan glycosyltransferase FtsW (394 aa).

Over 1–27 (MSALRSVAGLLQRWLLPARPAGLYDRQ) the chain is Cytoplasmic. The helical transmembrane segment at 28-48 (LVVLALALMAVGLVIVASASI) threads the bilayer. Over 49-64 (PEGIAINNDPFMFVKR) the chain is Periplasmic. Residues 65–85 (HGLFLVMALGISWFVLQVPMA) form a helical membrane-spanning segment. The Cytoplasmic portion of the chain corresponds to 86-88 (RWQ). The chain crosses the membrane as a helical span at residues 89-109 (HYNGPMLVLAILMLVLVLLVG). The Periplasmic portion of the chain corresponds to 110–123 (RSVNGSIRWLPLGP). A helical membrane pass occupies residues 124–144 (FNLQPAEFGKLALFVYLAGYL). The Cytoplasmic segment spans residues 145–154 (VRRQSEVRER). Residues 155-175 (FIGFMKPMAVLFVVAILLLAQ) form a helical membrane-spanning segment. A topological domain (periplasmic) is located at residue Pro-176. The chain crosses the membrane as a helical span at residues 177-197 (DLGSVVVMFVTSLGMLFLAGA). Arg-198 is a topological domain (cytoplasmic). A helical membrane pass occupies residues 199 to 219 (LGQFIGLILVGVSAVVTLVIA). The Periplasmic segment spans residues 220–279 (EPYRMRRVTSFLDPWADPFGSGYQLTQSLMAFGRGSWFGEGLGNSIQKMEYLPEAHTDFV). Residues 280-300 (FAILGEELGYAGVLGALFLIF) traverse the membrane as a helical segment. Over 301–322 (ALSFKALKLGHQALVAERLYEG) the chain is Cytoplasmic. Residues 323–343 (YLAIGIGIWFSFQTFVNVGAA) traverse the membrane as a helical segment. The Periplasmic portion of the chain corresponds to 344 to 354 (SGMMPTKGLTL). A helical transmembrane segment spans residues 355–375 (PLVSYGGSSLIIMMVAVSMLV). The Cytoplasmic portion of the chain corresponds to 376 to 394 (RIDFELRQASAQARVREVS).

It belongs to the SEDS family. FtsW subfamily.

Its subcellular location is the cell inner membrane. It catalyses the reaction [GlcNAc-(1-&gt;4)-Mur2Ac(oyl-L-Ala-gamma-D-Glu-L-Lys-D-Ala-D-Ala)](n)-di-trans,octa-cis-undecaprenyl diphosphate + beta-D-GlcNAc-(1-&gt;4)-Mur2Ac(oyl-L-Ala-gamma-D-Glu-L-Lys-D-Ala-D-Ala)-di-trans,octa-cis-undecaprenyl diphosphate = [GlcNAc-(1-&gt;4)-Mur2Ac(oyl-L-Ala-gamma-D-Glu-L-Lys-D-Ala-D-Ala)](n+1)-di-trans,octa-cis-undecaprenyl diphosphate + di-trans,octa-cis-undecaprenyl diphosphate + H(+). It functions in the pathway cell wall biogenesis; peptidoglycan biosynthesis. In terms of biological role, peptidoglycan polymerase that is essential for cell division. This Aeromonas salmonicida (strain A449) protein is Probable peptidoglycan glycosyltransferase FtsW.